Consider the following 122-residue polypeptide: Cofilin-5 (122 aa).

Residues 3–122 enclose the ADF-H domain; the sequence is SRIIEIDPNC…VKDLIQLSNL (120 aa).

This sequence belongs to the actin-binding proteins ADF family.

Its subcellular location is the cytoplasm. It is found in the cytoskeleton. Its function is as follows. Controls actin polymerization and depolymerization. This Dictyostelium discoideum (Social amoeba) protein is Cofilin-5 (cofF).